A 285-amino-acid polypeptide reads, in one-letter code: Homeobox protein vex1 (285 aa).

2 disordered regions span residues 30-54 (KSGN…LPSV) and 69-88 (NEER…APQE). Residues 69 to 80 (NEERSPPVKDQL) are compositionally biased toward basic and acidic residues. The homeobox DNA-binding region spans 131 to 190 (AARARTKFSPEQLEELERSFKENRYIGSSEKRRLSKVLKLSETQIKTWFQNRRMKFKRQT).

Widely expressed in the embryo prior to gastrulation. Becomes restricted to the ventral marginal zone by mid/late gastrulation. Ventral localization persists during gastrulation and neurulation in the ventral region of the closed blastopore and in the proctodeum during tail bud stages.

Its subcellular location is the nucleus. Its function is as follows. Transcriptional repressor. Acts in a ventral signaling pathway downstream of bmp4 to antagonize the Spemann organizer and ventrally pattern the embryonic mesoderm. Represses transcription of the dorsal genes gsc and otx2. The chain is Homeobox protein vex1 from Xenopus laevis (African clawed frog).